Consider the following 706-residue polypeptide: Choline transporter-like protein 2 (706 aa).

At 1–33 (MGGERQHYYGKHGTPQKYDPTFKGPIYHRGCTD) the chain is on the cytoplasmic side. Position 14 is a phosphothreonine (threonine 14). A helical membrane pass occupies residues 34 to 54 (VICCVFLLLAIVGYVAVGIIA). At 55 to 232 (WTHGDPRKVI…RIFEDYTVSW (178 aa)) the chain is on the extracellular side. 2 N-linked (GlcNAc...) asparagine glycosylation sites follow: asparagine 187 and asparagine 200. The helical transmembrane segment at 233 to 253 (YWIIIGLVIAMVLSLLFIILL) threads the bilayer. Topologically, residues 254-256 (RFL) are cytoplasmic. Residues 257-277 (AGIMVWVMIVMVILVLGYGIF) traverse the membrane as a helical segment. Residues 278 to 315 (HCYMEYSRLRGEAGSDISLVDLGFQTDLRVYLHLRQTW) are Extracellular-facing. A helical membrane pass occupies residues 316–336 (MAFMIILSILEVIIILLLIFL). Topologically, residues 337 to 364 (RKRILIAIALIKEASRAVGYVMCSMLYP) are cytoplasmic. Residues 365–385 (LVTFLLLCLCIAYWASTAIFL) form a helical membrane-spanning segment. The Extracellular portion of the chain corresponds to 386 to 440 (STSNEAVYKIFSDTDCQAVGKTCNPENFSSSSEFHLCPGAHCQFAFYGGESTYHR). A helical transmembrane segment spans residues 441 to 461 (ALLGLQIFNAFMFFWLANFVL). The Cytoplasmic segment spans residues 462–504 (ALGQVTLAGAFASYYWALKKPDDLPAFPLFSAFGRALRYHTGS). A helical transmembrane segment spans residues 505-525 (LAFGSLLLAIVQIIRVMLEYL). The Extracellular portion of the chain corresponds to 526–563 (DQRLKAAENKFAKFLMTCLKCCFWCLEKFIKFLNRNAY). A helical transmembrane segment spans residues 564–584 (IMIAIYGTNFCTSARNAFFLL). Topologically, residues 585–599 (MRNIIRVAVLDKVTD) are cytoplasmic. The chain crosses the membrane as a helical span at residues 600-620 (FLFLLGKLLIVGSVGILAFFF). The Extracellular portion of the chain corresponds to 621 to 638 (FTHRIRIVQDTAPPLNYY). Residues 639 to 659 (WVPILTVIVGSYLIAHGFFSV) traverse the membrane as a helical segment. At 660–706 (YGMCVDTLFLCFLEDLERNDGSMERPYFMSPTLKRLLNKTNRKPAES) the chain is on the cytoplasmic side.

It belongs to the CTL (choline transporter-like) family. In terms of assembly, interacts with COCH. In terms of processing, N-glycosylated.

It localises to the cell membrane. The protein resides in the mitochondrion outer membrane. It carries out the reaction choline(out) + n H(+)(in) = choline(in) + n H(+)(out). The catalysed reaction is ethanolamine(out) + n H(+)(in) = ethanolamine(in) + n H(+)(out). Functionally, choline/H+ antiporter, mainly in mitochodria. Also acts as a low-affinity ethanolamine/H+ antiporter, regulating the supply of extracellular ethanolamine (Etn) for the CDP-Etn pathway, redistribute intracellular Etn and balance the CDP-Cho and CDP-Etn arms of the Kennedy pathway. The protein is Choline transporter-like protein 2 (SLC44A2) of Sus scrofa (Pig).